The following is a 242-amino-acid chain: Ribonuclease 3 (242 aa).

The RNase III domain maps to 7–136 (LEALQNLLGY…LLASIYLDGG (130 aa)). Glu49 serves as a coordination point for Mg(2+). The active site involves Asp53. Residues Asp122 and Glu125 each contribute to the Mg(2+) site. Glu125 is an active-site residue. The 70-residue stretch at 167–236 (DYKTQLQELT…AEKALQIIAA (70 aa)) folds into the DRBM domain.

This sequence belongs to the ribonuclease III family. In terms of assembly, homodimer. Mg(2+) is required as a cofactor.

The protein localises to the cytoplasm. It carries out the reaction Endonucleolytic cleavage to 5'-phosphomonoester.. Its function is as follows. Digests double-stranded RNA. Involved in the processing of primary rRNA transcript to yield the immediate precursors to the large and small rRNAs (23S and 16S). Processes some mRNAs, and tRNAs when they are encoded in the rRNA operon. Processes pre-crRNA and tracrRNA of type II CRISPR loci if present in the organism. The chain is Ribonuclease 3 from Syntrophobacter fumaroxidans (strain DSM 10017 / MPOB).